Here is a 378-residue protein sequence, read N- to C-terminus: Putative F-box protein At3g24580 (378 aa).

An F-box domain is found at 1 to 47; the sequence is MTKMSNLPNDLAEEVLSRVSLTSLRNVRLTCKDWNTLSKGESFAKNH.

The chain is Putative F-box protein At3g24580 from Arabidopsis thaliana (Mouse-ear cress).